A 246-amino-acid polypeptide reads, in one-letter code: UDP-N-acetyl-D-mannosaminuronic acid transferase (246 aa).

This sequence belongs to the glycosyltransferase 26 family.

It catalyses the reaction UDP-N-acetyl-alpha-D-mannosaminouronate + N-acetyl-alpha-D-glucosaminyl-di-trans,octa-cis-undecaprenyl diphosphate = beta-D-ManNAcA-(1-&gt;4)-alpha-D-GlcNAc-di-trans,octa-cis-undecaprenyl diphosphate + UDP + H(+). It functions in the pathway bacterial outer membrane biogenesis; enterobacterial common antigen biosynthesis. Functionally, catalyzes the synthesis of Und-PP-GlcNAc-ManNAcA (Lipid II), the second lipid-linked intermediate involved in enterobacterial common antigen (ECA) synthesis. In Shigella flexneri, this protein is UDP-N-acetyl-D-mannosaminuronic acid transferase.